The chain runs to 423 residues: Protein disulfide isomerase-like 5-2 (423 aa).

The N-terminal stretch at 1-35 (MAATTTRPLPLLLLLLLPPLLLLLLSFHAAAAAAA) is a signal peptide. The Thioredoxin domain occupies 36–149 (EEFPRDGRVI…LVRNLNKFVA (114 aa)). Catalysis depends on nucleophile residues C71 and C74. C71 and C74 are oxidised to a cystine. N-linked (GlcNAc...) asparagine glycosylation is present at N181. Residues 386–406 (LVSLNSLYILICVFALLGVMI) traverse the membrane as a helical segment.

Belongs to the protein disulfide isomerase family.

It localises to the membrane. Functionally, acts as a protein-folding catalyst that interacts with nascent polypeptides to catalyze the formation, isomerization, and reduction or oxidation of disulfide bonds. May play a role in storage protein biogenesis. The sequence is that of Protein disulfide isomerase-like 5-2 (PDIL5-2) from Oryza sativa subsp. japonica (Rice).